We begin with the raw amino-acid sequence, 454 residues long: Cathepsin C (454 aa).

Positions 1 to 20 (MHWVFHCILIILACLRFTCA) are cleaved as a signal peptide. The propeptide occupies 21–217 (DTPANCTYED…SKELISLTGN (197 aa)). N-linked (GlcNAc...) asparagine glycosylation is present at Asn25. Cystine bridges form between Cys26–Cys107, Cys244–Cys287, and Cys280–Cys321. Cys247 is a catalytic residue. Asn265 carries an N-linked (GlcNAc...) asparagine glycan. Phe291 is a binding site for chloride. A glycan (N-linked (GlcNAc...) asparagine) is linked at Asn326. Residue Tyr337 participates in chloride binding. Residues His398 and Asn420 contribute to the active site.

Belongs to the peptidase C1 family. The cofactor is chloride.

The protein localises to the lysosome. Its function is as follows. Thiol protease. Has a role as a digestive enzyme. In Schistosoma mansoni (Blood fluke), this protein is Cathepsin C.